Here is a 309-residue protein sequence, read N- to C-terminus: Aspartate carbamoyltransferase catalytic subunit (309 aa).

Residues Arg-55 and Thr-56 each contribute to the carbamoyl phosphate site. Lys-85 contributes to the L-aspartate binding site. Carbamoyl phosphate contacts are provided by Arg-106, His-135, and Gln-138. L-aspartate-binding residues include Arg-168 and Arg-230. Residues Leu-268 and Pro-269 each contribute to the carbamoyl phosphate site.

Belongs to the aspartate/ornithine carbamoyltransferase superfamily. ATCase family. As to quaternary structure, heterododecamer (2C3:3R2) of six catalytic PyrB chains organized as two trimers (C3), and six regulatory PyrI chains organized as three dimers (R2).

It catalyses the reaction carbamoyl phosphate + L-aspartate = N-carbamoyl-L-aspartate + phosphate + H(+). It functions in the pathway pyrimidine metabolism; UMP biosynthesis via de novo pathway; (S)-dihydroorotate from bicarbonate: step 2/3. Catalyzes the condensation of carbamoyl phosphate and aspartate to form carbamoyl aspartate and inorganic phosphate, the committed step in the de novo pyrimidine nucleotide biosynthesis pathway. In Aliivibrio fischeri (strain ATCC 700601 / ES114) (Vibrio fischeri), this protein is Aspartate carbamoyltransferase catalytic subunit.